Here is a 156-residue protein sequence, read N- to C-terminus: Probable cyclic pyranopterin monophosphate synthase (156 aa).

Residues M73–H75 and M109–E110 contribute to the substrate site. Residue D124 is part of the active site.

The protein belongs to the MoaC family. In terms of assembly, homohexamer; trimer of dimers.

It catalyses the reaction (8S)-3',8-cyclo-7,8-dihydroguanosine 5'-triphosphate = cyclic pyranopterin phosphate + diphosphate. Its pathway is cofactor biosynthesis; molybdopterin biosynthesis. Catalyzes the conversion of (8S)-3',8-cyclo-7,8-dihydroguanosine 5'-triphosphate to cyclic pyranopterin monophosphate (cPMP). The protein is Probable cyclic pyranopterin monophosphate synthase of Archaeoglobus fulgidus (strain ATCC 49558 / DSM 4304 / JCM 9628 / NBRC 100126 / VC-16).